The chain runs to 216 residues: Protein-L-isoaspartate O-methyltransferase (216 aa).

Ser-63 is a catalytic residue.

This sequence belongs to the methyltransferase superfamily. L-isoaspartyl/D-aspartyl protein methyltransferase family.

The protein resides in the cytoplasm. The catalysed reaction is [protein]-L-isoaspartate + S-adenosyl-L-methionine = [protein]-L-isoaspartate alpha-methyl ester + S-adenosyl-L-homocysteine. Functionally, catalyzes the methyl esterification of L-isoaspartyl residues in peptides and proteins that result from spontaneous decomposition of normal L-aspartyl and L-asparaginyl residues. It plays a role in the repair and/or degradation of damaged proteins. This Rhodopseudomonas palustris (strain BisB18) protein is Protein-L-isoaspartate O-methyltransferase.